The sequence spans 361 residues: MTQVYNFSAGPAMLPVEVLRRAEQELRNWHGLGTSVMEISHRSKEFMQVAEESEKDLRDLLQIPANYKVLFCHGGARAQFAAVPLNLLGDSNSADYIDGGYWAHSAVKEAQKYCTPHVIDVTTHDNGLTGIQPMKQWKLSDNAAYVHYCPNETIDGVAINEQPDFGNKVVVADYSSAILSRPIDISRYGVIYAGAQKNIGPAGLTLVIVREDLLGKAHTALPSILDYKVLADNDSMFNTPPTFAWYLSGLVFKWLKEQGGLGEMEKRNQAKAELLYGAIDRTGFYRNQVAIANRSWMNVPFQMAEASLDKLFLSEAEAQGLQALKGHRVAGGMRASIYNAMPIEGVKALTDFMADFERRHG.

Arg-42 is an L-glutamate binding site. Pyridoxal 5'-phosphate contacts are provided by residues 76-77, Trp-102, Thr-153, Asp-173, and Gln-196; that span reads AR. The residue at position 197 (Lys-197) is an N6-(pyridoxal phosphate)lysine. Residue 238–239 coordinates pyridoxal 5'-phosphate; sequence NT.

This sequence belongs to the class-V pyridoxal-phosphate-dependent aminotransferase family. SerC subfamily. In terms of assembly, homodimer. Requires pyridoxal 5'-phosphate as cofactor.

Its subcellular location is the cytoplasm. It carries out the reaction O-phospho-L-serine + 2-oxoglutarate = 3-phosphooxypyruvate + L-glutamate. The catalysed reaction is 4-(phosphooxy)-L-threonine + 2-oxoglutarate = (R)-3-hydroxy-2-oxo-4-phosphooxybutanoate + L-glutamate. It functions in the pathway amino-acid biosynthesis; L-serine biosynthesis; L-serine from 3-phospho-D-glycerate: step 2/3. It participates in cofactor biosynthesis; pyridoxine 5'-phosphate biosynthesis; pyridoxine 5'-phosphate from D-erythrose 4-phosphate: step 3/5. Catalyzes the reversible conversion of 3-phosphohydroxypyruvate to phosphoserine and of 3-hydroxy-2-oxo-4-phosphonooxybutanoate to phosphohydroxythreonine. The chain is Phosphoserine aminotransferase from Yersinia pseudotuberculosis serotype IB (strain PB1/+).